Here is a 341-residue protein sequence, read N- to C-terminus: MVKYTVENKIIAGLPKGKLKGANFVIAHETANSKSTIDNEVSYMTRNWKNAFVTHFVGGGGRVVQVANVNYVSWGAGQYANSYSYAQVELCRTSNATTFKKDYEVYCQLLVDLAKKAGIPITLDSGSKTSDKGIKSHKWVADKLGGTTHQDPYAYLSSWGISKAQFASDLAKVSGGGNTGTAPAKPSTPAPKPSTPSTNLDKLGLVDYMNAKKMDSSYSNRDKLAKQYGIANYSGTASQNTTLLSKIKGGAPKPSTPAPKPSTSTAKKIYFPPNKGNWSVYPTNKAPVKANAIGAINPTKFGGLTYTIQKDRGNGVYEIQTDQFGRVQVYGAPSTGAVIKK.

The N-acetylmuramoyl-L-alanine amidase domain maps to 23–153 (NFVIAHETAN…LGGTTHQDPY (131 aa)). 2 disordered regions span residues 175 to 201 (GGGN…TNLD) and 248 to 267 (KGGA…STAK).

Belongs to the N-acetylmuramoyl-L-alanine amidase 2 family.

The protein localises to the secreted. It carries out the reaction Hydrolyzes the link between N-acetylmuramoyl residues and L-amino acid residues in certain cell-wall glycopeptides.. In Listeria phage A511 (Bacteriophage A511), this protein is Endolysin (PLY511).